Here is a 745-residue protein sequence, read N- to C-terminus: Phosphoribosylformylglycinamidine synthase subunit PurL (745 aa).

Residue His-41 is part of the active site. Positions 44 and 83 each coordinate ATP. A Mg(2+)-binding site is contributed by Glu-85. Residues Ser-86–His-89 and Arg-108 contribute to the substrate site. Catalysis depends on His-87, which acts as the Proton acceptor. Asp-109 contacts Mg(2+). Gln-232 provides a ligand contact to substrate. Asp-260 is a binding site for Mg(2+). Glu-304–Gln-306 is a binding site for substrate. Asp-494 and Gly-531 together coordinate ATP. Mg(2+) is bound at residue Asn-532. Ser-534 contacts substrate.

It belongs to the FGAMS family. In terms of assembly, monomer. Part of the FGAM synthase complex composed of 1 PurL, 1 PurQ and 2 PurS subunits.

The protein resides in the cytoplasm. It catalyses the reaction N(2)-formyl-N(1)-(5-phospho-beta-D-ribosyl)glycinamide + L-glutamine + ATP + H2O = 2-formamido-N(1)-(5-O-phospho-beta-D-ribosyl)acetamidine + L-glutamate + ADP + phosphate + H(+). It participates in purine metabolism; IMP biosynthesis via de novo pathway; 5-amino-1-(5-phospho-D-ribosyl)imidazole from N(2)-formyl-N(1)-(5-phospho-D-ribosyl)glycinamide: step 1/2. Functionally, part of the phosphoribosylformylglycinamidine synthase complex involved in the purines biosynthetic pathway. Catalyzes the ATP-dependent conversion of formylglycinamide ribonucleotide (FGAR) and glutamine to yield formylglycinamidine ribonucleotide (FGAM) and glutamate. The FGAM synthase complex is composed of three subunits. PurQ produces an ammonia molecule by converting glutamine to glutamate. PurL transfers the ammonia molecule to FGAR to form FGAM in an ATP-dependent manner. PurS interacts with PurQ and PurL and is thought to assist in the transfer of the ammonia molecule from PurQ to PurL. This chain is Phosphoribosylformylglycinamidine synthase subunit PurL, found in Aquifex aeolicus (strain VF5).